The following is a 154-amino-acid chain: Transcription antitermination protein NusB (154 aa).

Positions 132–154 (KDKQSPQSTPLDDSDKDESDQTN) are disordered. The span at 143-154 (DDSDKDESDQTN) shows a compositional bias: acidic residues.

This sequence belongs to the NusB family.

Involved in transcription antitermination. Required for transcription of ribosomal RNA (rRNA) genes. Binds specifically to the boxA antiterminator sequence of the ribosomal RNA (rrn) operons. This is Transcription antitermination protein NusB from Bifidobacterium animalis subsp. lactis (strain AD011).